Here is a 1253-residue protein sequence, read N- to C-terminus: Cytoplasmic FMR1-interacting protein 1 (1253 aa).

Serine 583 carries the post-translational modification Phosphoserine. The tract at residues aspartate 724–lysine 732 is EIF4E-binding. The residue at position 1234 (threonine 1234) is a Phosphothreonine.

Belongs to the CYFIP family. As to quaternary structure, component of the WAVE1 complex composed of ABI2, CYFIP1 or CYFIP2, BRK1, NCKAP1 and WASF1/WAVE1. Within the complex, a heterodimer containing NCKAP1 and CYFIP1 interacts with a heterotrimer formed by WAVE1, ABI2 and BRK1. Component of the CYFIP1-EIF4E-FMR1 complex which is composed of CYFIP, EIF4E and FMR1. Interacts with FMR1 but does not bind to related proteins FXR1 or FXR2. Interaction with EIF4E stimulates FMR1 binding. Component of the WAVE2 complex composed of ABI1, CYFIP1/SRA1, NCKAP1/NAP1 (NCKAP1L/HEM1 in hematopoietic cells) and WASF2/WAVE2. Interacts with the active GTP-bound form of RAC1. Interacts through its C-terminus with the C-terminus of DPYSL2/CRMP2 which is necessary for DPYSL2-induced axon outgrowth. Interacts with NYAP1, NYAP2 and MYO16. Interacts with TMEM108 (via N-terminus); the interaction associates TMEM108 with the WAVE1 complex. In terms of tissue distribution, highly expressed in embryonic and adult developing nervous system.

The protein resides in the cytoplasm. Its subcellular location is the perinuclear region. The protein localises to the cell projection. It localises to the lamellipodium. It is found in the ruffle. The protein resides in the synapse. Its subcellular location is the synaptosome. Its function is as follows. Component of the CYFIP1-EIF4E-FMR1 complex which binds to the mRNA cap and mediates translational repression. In the CYFIP1-EIF4E-FMR1 complex this subunit is an adapter between EIF4E and FMR1. Promotes the translation repression activity of FMR1 in brain probably by mediating its association with EIF4E and mRNA. Regulates formation of membrane ruffles and lamellipodia. Plays a role in axon outgrowth. Binds to F-actin but not to RNA. Part of the WAVE complex that regulates actin filament reorganization via its interaction with the Arp2/3 complex. Actin remodeling activity is regulated by RAC1. Regulator of epithelial morphogenesis. May act as an invasion suppressor in cancers. As component of the WAVE1 complex, required for BDNF-NTRK2 endocytic trafficking and signaling from early endosomes. The polypeptide is Cytoplasmic FMR1-interacting protein 1 (Mus musculus (Mouse)).